We begin with the raw amino-acid sequence, 366 residues long: Probable quinol oxidase subunit 2 (366 aa).

Residues 1–19 form the signal peptide; the sequence is MSKFKSLLLLFGTLILLSG. The N-palmitoyl cysteine moiety is linked to residue cysteine 20. Cysteine 20 is lipidated: S-diacylglycerol cysteine. A run of 2 helical transmembrane segments spans residues 38–58 and 80–100; these read FLIL…LGMF and AIIE…LAIP. The disordered stretch occupies residues 330–366; the sequence is EPYNNEFKKDESKNAKEMKKISKDAQDQDNDDHGGGH. Positions 335 to 366 are enriched in basic and acidic residues; the sequence is EFKKDESKNAKEMKKISKDAQDQDNDDHGGGH.

Belongs to the cytochrome c oxidase subunit 2 family.

It is found in the cell membrane. The enzyme catalyses 2 a quinol + O2 = 2 a quinone + 2 H2O. Catalyzes quinol oxidation with the concomitant reduction of oxygen to water. Subunit II transfers the electrons from a quinol to the binuclear center of the catalytic subunit I. This Staphylococcus aureus (strain bovine RF122 / ET3-1) protein is Probable quinol oxidase subunit 2 (qoxA).